The sequence spans 98 residues: NADH-ubiquinone oxidoreductase chain 4L (98 aa).

Helical transmembrane passes span 1 to 21, 29 to 49, and 61 to 81; these read MSLTYMNMFMAFTISLLGLLM, SLLCLEGMMLSLFVMMTMTIL, and IILLVFAACEAALGLSLLVMV.

Belongs to the complex I subunit 4L family. Core subunit of respiratory chain NADH dehydrogenase (Complex I) which is composed of 45 different subunits.

It is found in the mitochondrion inner membrane. The catalysed reaction is a ubiquinone + NADH + 5 H(+)(in) = a ubiquinol + NAD(+) + 4 H(+)(out). Its function is as follows. Core subunit of the mitochondrial membrane respiratory chain NADH dehydrogenase (Complex I) which catalyzes electron transfer from NADH through the respiratory chain, using ubiquinone as an electron acceptor. Part of the enzyme membrane arm which is embedded in the lipid bilayer and involved in proton translocation. The chain is NADH-ubiquinone oxidoreductase chain 4L (MT-ND4L) from Chiroderma trinitatum (Little big-eyed bat).